Reading from the N-terminus, the 489-residue chain is MEPGLEHALRRTPSWSSLGGSEHQEMSFLEQENSSSWPSPAVTSSSERIRGKRRAKALRWTRQKSVEEGEPPGQGEGPRSRPAAESTGLEATFPKTTPLAQADPAGVGTPPTGWDCLPSDCTASAAGSSTDDVELATEFPATEAWECELEGLLEERPALCLSPQAPFPKLGWDDELRKPGAQIYMRFMQEHTCYDAMATSSKLVIFDTMLEIKKAFFALVANGVRAAPLWDSKKQSFVGMLTITDFILVLHRYYRSPLVQIYEIEQHKIETWREIYLQGCFKPLVSISPNDSLFEAVYTLIKNRIHRLPVLDPVSGNVLHILTHKRLLKFLHIFGSLLPRPSFLYRTIQDLGIGTFRDLAVVLETAPILTALDIFVDRRVSALPVVNECGQVVGLYSRFDVIHLAAQQTYNHLDMSVGEALRQRTLCLEGVLSCQPHESLGEVIDRIAREQVHRLVLVDETQHLLGVVSLSDILQALVLSPAGIDALGA.

A disordered region spans residues Met1–Gly113. A compositionally biased stretch (low complexity) spans Ser34–Ser46. Positions Arg50–Arg62 are enriched in basic residues. CBS domains are found at residues Met197–Leu258, Cys280–Arg340, and Thr355–Met415. ADP-binding positions include Arg225, Met240 to Asp245, Val285, His306 to Arg307, and Lys325. Residues Arg225, Met240–Asp245, Val285, His306, His306–Arg307, Lys325, Thr355, Ala360, Ser381–Ala382, Ser397–Asp400, Arg424, Leu432, His453, His453–Arg454, and Ser469–Asp472 contribute to the AMP site. ATP-binding positions include Arg225, Met240–Asp245, Val285, His306–Arg307, Arg307, and Lys325. Residues Leu293–Val314 carry the AMPK pseudosubstrate motif. ADP-binding positions include Ser397 to Asp400, Arg424, Leu432, and His453 to Arg454. Residues Ser397 to Asp400, Arg424, Leu432, and His453 to Arg454 each bind ATP. Residues Cys427 to Ala486 enclose the CBS 4 domain.

Belongs to the 5'-AMP-activated protein kinase gamma subunit family. As to quaternary structure, AMPK is a heterotrimer of an alpha catalytic subunit (PRKAA1 or PRKAA2), a beta (PRKAB1 or PRKAB2) and a gamma non-catalytic subunits (PRKAG1, PRKAG2 or PRKAG3). Interacts with FNIP1 and FNIP2. In terms of processing, phosphorylated by ULK1; leading to negatively regulate AMPK activity and suggesting the existence of a regulatory feedback loop between ULK1 and AMPK. Glycosylated; O-GlcNAcylated by OGT, promoting the AMP-activated protein kinase (AMPK) activity. Skeletal muscle, with weak expression in heart and pancreas.

Functionally, AMP/ATP-binding subunit of AMP-activated protein kinase (AMPK), an energy sensor protein kinase that plays a key role in regulating cellular energy metabolism. In response to reduction of intracellular ATP levels, AMPK activates energy-producing pathways and inhibits energy-consuming processes: inhibits protein, carbohydrate and lipid biosynthesis, as well as cell growth and proliferation. AMPK acts via direct phosphorylation of metabolic enzymes, and by longer-term effects via phosphorylation of transcription regulators. AMPK also acts as a regulator of cellular polarity by remodeling the actin cytoskeleton; probably by indirectly activating myosin. The AMPK gamma3 subunit is a non-catalytic subunit with a regulatory role in muscle energy metabolism. It mediates binding to AMP, ADP and ATP, leading to AMPK activation or inhibition: AMP-binding results in allosteric activation of alpha catalytic subunit (PRKAA1 or PRKAA2) both by inducing phosphorylation and preventing dephosphorylation of catalytic subunits. ADP also stimulates phosphorylation, without stimulating already phosphorylated catalytic subunit. ATP promotes dephosphorylation of catalytic subunit, rendering the AMPK enzyme inactive. The protein is 5'-AMP-activated protein kinase subunit gamma-3 (PRKAG3) of Homo sapiens (Human).